The sequence spans 442 residues: 3-phosphoshikimate 1-carboxyvinyltransferase (442 aa).

Residues lysine 25, serine 26, and arginine 30 each coordinate 3-phosphoshikimate. Residue lysine 25 participates in phosphoenolpyruvate binding. Positions 96 and 124 each coordinate phosphoenolpyruvate. 3-phosphoshikimate is bound by residues serine 171, serine 172, glutamine 173, serine 203, aspartate 325, and lysine 352. Glutamine 173 is a phosphoenolpyruvate binding site. Aspartate 325 (proton acceptor) is an active-site residue. Phosphoenolpyruvate is bound by residues arginine 356, arginine 400, and lysine 425.

It belongs to the EPSP synthase family. As to quaternary structure, monomer.

The protein localises to the cytoplasm. The enzyme catalyses 3-phosphoshikimate + phosphoenolpyruvate = 5-O-(1-carboxyvinyl)-3-phosphoshikimate + phosphate. Its pathway is metabolic intermediate biosynthesis; chorismate biosynthesis; chorismate from D-erythrose 4-phosphate and phosphoenolpyruvate: step 6/7. Functionally, catalyzes the transfer of the enolpyruvyl moiety of phosphoenolpyruvate (PEP) to the 5-hydroxyl of shikimate-3-phosphate (S3P) to produce enolpyruvyl shikimate-3-phosphate and inorganic phosphate. The sequence is that of 3-phosphoshikimate 1-carboxyvinyltransferase from Bordetella bronchiseptica (strain ATCC BAA-588 / NCTC 13252 / RB50) (Alcaligenes bronchisepticus).